Here is a 141-residue protein sequence, read N- to C-terminus: Large ribosomal subunit protein uL16 (141 aa).

This sequence belongs to the universal ribosomal protein uL16 family. Part of the 50S ribosomal subunit.

Binds 23S rRNA and is also seen to make contacts with the A and possibly P site tRNAs. In Geobacillus kaustophilus (strain HTA426), this protein is Large ribosomal subunit protein uL16.